Reading from the N-terminus, the 177-residue chain is SsrA-binding protein (177 aa).

Disordered stretches follow at residues 1-23 (MYVP…KDGK) and 148-177 (YDKR…QRGE). Residues 148–165 (YDKRQTLREKQDRRESDR) are compositionally biased toward basic and acidic residues.

It belongs to the SmpB family.

It is found in the cytoplasm. Functionally, required for rescue of stalled ribosomes mediated by trans-translation. Binds to transfer-messenger RNA (tmRNA), required for stable association of tmRNA with ribosomes. tmRNA and SmpB together mimic tRNA shape, replacing the anticodon stem-loop with SmpB. tmRNA is encoded by the ssrA gene; the 2 termini fold to resemble tRNA(Ala) and it encodes a 'tag peptide', a short internal open reading frame. During trans-translation Ala-aminoacylated tmRNA acts like a tRNA, entering the A-site of stalled ribosomes, displacing the stalled mRNA. The ribosome then switches to translate the ORF on the tmRNA; the nascent peptide is terminated with the 'tag peptide' encoded by the tmRNA and targeted for degradation. The ribosome is freed to recommence translation, which seems to be the essential function of trans-translation. This is SsrA-binding protein from Streptomyces avermitilis (strain ATCC 31267 / DSM 46492 / JCM 5070 / NBRC 14893 / NCIMB 12804 / NRRL 8165 / MA-4680).